A 97-amino-acid polypeptide reads, in one-letter code: Large ribosomal subunit protein bL28 (97 aa).

This sequence belongs to the bacterial ribosomal protein bL28 family.

The sequence is that of Large ribosomal subunit protein bL28 from Rhizorhabdus wittichii (strain DSM 6014 / CCUG 31198 / JCM 15750 / NBRC 105917 / EY 4224 / RW1) (Sphingomonas wittichii).